A 270-amino-acid chain; its full sequence is Phthiotriol/phenolphthiotriol dimycocerosates methyltransferase (270 aa).

The protein belongs to the methyltransferase superfamily. Phthiotriol/phenolphthiotriol dimycocerosates methyltransferase family.

Functionally, catalyzes the methylation of the lipid moiety of the intermediate compounds phthiotriol and glycosylated phenolphthiotriol dimycoserosates to form phthiocerol dimycocerosates (DIM A) and glycosylated phenolphthiocerol dimycocerosates (PGL). The polypeptide is Phthiotriol/phenolphthiotriol dimycocerosates methyltransferase (Mycobacterium leprae (strain TN)).